The sequence spans 472 residues: MFGLNKASSTPAGGLFGQASGASTGNANTGFSFGGTQTGQNTGPSTGGLFGAKPAGSTGGLGASFGQQQQQSQTNAFGGSATTGGGLFGNKPNNTANTGGGLFGANSNSNSGSLFGSNNAQTSRGLFGNNNTNNINNSSSGMNNASAGLFGSKPAGGTSLFGNTSTSSAPAQNQGMFGAKPAGTSLFGNNAGNTTTGGGLFGSKPTGATSLFGSSNNNNNNNNSNNIMSASGGLFGNQQQQLQQQPQMQCALQNLSQLPITPMTRISELPPQIRQEIEQLDQYIQKQVQISHHLKADTIDHDELIDSIPRDVAYLLKSESATSQYLKQDLKKISSFKSLIDEDLLDTQTFSVLLQQLLTPGSKISSNDLDKFFQKKIHLYEKKLEDYCRILSDIETAVNGIDTDLFGAPNNPNSTAITADLGSSEAENLLQLKTGLAAIVSTVIEEFTLFMDIAERIAVLHQKTKTLASLSI.

Residues phenylalanine 2–glycine 3 form an FG 1 repeat. The stretch at glycine 14 to glycine 17 is one GLFG 1 repeat. The tract at residues asparagine 28 to glycine 104 is disordered. An FG 2 repeat occupies phenylalanine 33–glycine 34. One copy of the GLFG 2 repeat lies at glycine 48–glycine 51. Residues serine 64–serine 80 show a composition bias toward low complexity. FG repeat units lie at residues phenylalanine 65–glycine 66 and phenylalanine 77–glycine 78. GLFG repeat units lie at residues glycine 86–glycine 89 and glycine 101–glycine 104. One copy of the SLFG 1 repeat lies at serine 113–glycine 116. 2 GLFG repeats span residues glycine 125–glycine 128 and glycine 148–glycine 151. Residues serine 159–glycine 162 form an SLFG 2 repeat. The GLFG 7; approximate repeat unit spans residues glycine 175 to glycine 178. An SLFG 3 repeat occupies serine 185 to glycine 188. The GLFG 8 repeat unit spans residues glycine 199–glycine 202. The SLFG 4 repeat unit spans residues serine 210–glycine 213. The interval leucine 211–leucine 242 is disordered. The span at serine 214–asparagine 226 shows a compositional bias: low complexity. The stretch at glycine 233–glycine 236 is one GLFG 9 repeat.

It belongs to the nucleoporin GLFG family. As to quaternary structure, component of the nuclear pore complex (NPC). NPC constitutes the exclusive means of nucleocytoplasmic transport. NPCs allow the passive diffusion of ions and small molecules and the active, nuclear transport receptor-mediated bidirectional transport of macromolecules such as proteins, RNAs, ribonucleoparticles (RNPs), and ribosomal subunits across the nuclear envelope. Due to its 8-fold rotational symmetry, all subunits are present with 8 copies or multiples thereof. NUP49 is part of the NUP57 subcomplex (NIC96, NSP1, NUP49, NUP57) interacting with NUP57. Interacts through its FG repeats with karyopherins.

It localises to the nucleus. Its subcellular location is the nuclear pore complex. The protein resides in the nucleus membrane. In terms of biological role, functions as a component of the nuclear pore complex (NPC). NPC components, collectively referred to as nucleoporins (NUPs), can play the role of both NPC structural components and of docking or interaction partners for transiently associated nuclear transport factors. Active directional transport is assured by both, a Phe-Gly (FG) repeat affinity gradient for these transport factors across the NPC and a transport cofactor concentration gradient across the nuclear envelope (GSP1 and GSP2 GTPases associated predominantly with GTP in the nucleus, with GDP in the cytoplasm). NUP49 plays an important role in several nuclear transport pathways including poly(A)+ RNA, tRNA, and pre-ribosome transport. The polypeptide is Nucleoporin NUP49/NSP49 (NUP49) (Saccharomyces cerevisiae (strain ATCC 204508 / S288c) (Baker's yeast)).